A 330-amino-acid chain; its full sequence is tRNA uridine(34) hydroxylase (330 aa).

The region spanning 123 to 217 (SDPEVILVDT…YLEEVKQEES (95 aa)) is the Rhodanese domain. Cys177 (cysteine persulfide intermediate) is an active-site residue.

This sequence belongs to the TrhO family.

It carries out the reaction uridine(34) in tRNA + AH2 + O2 = 5-hydroxyuridine(34) in tRNA + A + H2O. Its function is as follows. Catalyzes oxygen-dependent 5-hydroxyuridine (ho5U) modification at position 34 in tRNAs. The protein is tRNA uridine(34) hydroxylase of Shewanella sp. (strain ANA-3).